A 335-amino-acid polypeptide reads, in one-letter code: Mitochondrial amidoxime reducing component 2 (335 aa).

Residues 1 to 35 (MGASSSSALARLGLPAQARPRWLGVAVLGLAAVAL) constitute a mitochondrion transit peptide. Residues lysine 59, lysine 138, and lysine 144 each participate in a glycyl lysine isopeptide (Lys-Gly) (interchain with G-Cter in ubiquitin) cross-link. Residue lysine 156 is modified to N6-acetyllysine; alternate. Lysine 156 participates in a covalent cross-link: Glycyl lysine isopeptide (Lys-Gly) (interchain with G-Cter in ubiquitin); alternate. Glycyl lysine isopeptide (Lys-Gly) (interchain with G-Cter in ubiquitin) cross-links involve residues lysine 173, lysine 187, lysine 287, and lysine 294. The 147-residue stretch at 188-334 (GRTSRKLLPT…LRVGDPVYRM (147 aa)) folds into the MOSC domain.

Component of a complex composed of cytochrome b5, NADH-cytochrome b5 reductase (CYB5R3) and MTARC2. Requires Mo-molybdopterin as cofactor. In terms of processing, ubiquitinated by PRKN during mitophagy, leading to its degradation and enhancement of mitophagy. Deubiquitinated by USP30.

It localises to the mitochondrion outer membrane. It is found in the peroxisome. The catalysed reaction is N(omega)-hydroxy-L-arginine + 2 Fe(II)-[cytochrome b5] + 2 H(+) = L-arginine + 2 Fe(III)-[cytochrome b5] + H2O. Functionally, catalyzes the reduction of N-oxygenated molecules, acting as a counterpart of cytochrome P450 and flavin-containing monooxygenases in metabolic cycles. As a component of prodrug-converting system, reduces a multitude of N-hydroxylated prodrugs particularly amidoximes, leading to increased drug bioavailability. May be involved in mitochondrial N(omega)-hydroxy-L-arginine (NOHA) reduction, regulating endogenous nitric oxide levels and biosynthesis. Postulated to cleave the N-OH bond of N-hydroxylated substrates in concert with electron transfer from NADH to cytochrome b5 reductase then to cytochrome b5, the ultimate electron donor that primes the active site for substrate reduction. In Macaca fascicularis (Crab-eating macaque), this protein is Mitochondrial amidoxime reducing component 2 (MTARC2).